The following is an 80-amino-acid chain: Exodeoxyribonuclease 7 small subunit (80 aa).

The segment at leucine 60–glutamate 80 is disordered. Residues isoleucine 61–leucine 70 are compositionally biased toward basic and acidic residues. Polar residues predominate over residues aspartate 71 to glutamate 80.

It belongs to the XseB family. In terms of assembly, heterooligomer composed of large and small subunits.

The protein localises to the cytoplasm. The catalysed reaction is Exonucleolytic cleavage in either 5'- to 3'- or 3'- to 5'-direction to yield nucleoside 5'-phosphates.. In terms of biological role, bidirectionally degrades single-stranded DNA into large acid-insoluble oligonucleotides, which are then degraded further into small acid-soluble oligonucleotides. The polypeptide is Exodeoxyribonuclease 7 small subunit (Lactobacillus acidophilus (strain ATCC 700396 / NCK56 / N2 / NCFM)).